The chain runs to 183 residues: uncharacterized protein (183 aa).

Lys21 participates in a covalent cross-link: Glycyl lysine isopeptide (Lys-Gly) (interchain with G-Cter in ubiquitin). Disordered regions lie at residues 24-111 and 160-183; these read NTTT…QNDN and PQSI…TRRP. Low complexity predominate over residues 99–108; the sequence is QQQQQQQQQQ. Residues 170-183 are compositionally biased toward polar residues; that stretch reads LPPSNASNTTTRRP.

Its subcellular location is the cytoplasm. This is an uncharacterized protein from Saccharomyces cerevisiae (strain ATCC 204508 / S288c) (Baker's yeast).